A 63-amino-acid polypeptide reads, in one-letter code: Cytochrome c oxidase subunit 7C, mitochondrial (63 aa).

The N-terminal 16 residues, 1–16, are a transit peptide targeting the mitochondrion; that stretch reads MLGQSIRRFTTSVVRR. The Mitochondrial matrix segment spans residues 17 to 33; it reads SHYEEGPGKNLPFSVEN. Lys-25 carries the post-translational modification N6-acetyllysine; alternate. Position 25 is an N6-succinyllysine; alternate (Lys-25). Residues 34–60 traverse the membrane as a helical segment; it reads KWRLLAMMTLYFGSGFAAPFFIVRHQL. Over 61-63 the chain is Mitochondrial intermembrane; sequence LKK.

The protein belongs to the cytochrome c oxidase VIIc family. In terms of assembly, component of the cytochrome c oxidase (complex IV, CIV), a multisubunit enzyme composed of 14 subunits. The complex is composed of a catalytic core of 3 subunits MT-CO1, MT-CO2 and MT-CO3, encoded in the mitochondrial DNA, and 11 supernumerary subunits COX4I, COX5A, COX5B, COX6A, COX6B, COX6C, COX7A, COX7B, COX7C, COX8 and NDUFA4, which are encoded in the nuclear genome. The complex exists as a monomer or a dimer and forms supercomplexes (SCs) in the inner mitochondrial membrane with NADH-ubiquinone oxidoreductase (complex I, CI) and ubiquinol-cytochrome c oxidoreductase (cytochrome b-c1 complex, complex III, CIII), resulting in different assemblies (supercomplex SCI(1)III(2)IV(1) and megacomplex MCI(2)III(2)IV(2)). Interacts with RAB5IF.

The protein localises to the mitochondrion inner membrane. The protein operates within energy metabolism; oxidative phosphorylation. In terms of biological role, component of the cytochrome c oxidase, the last enzyme in the mitochondrial electron transport chain which drives oxidative phosphorylation. The respiratory chain contains 3 multisubunit complexes succinate dehydrogenase (complex II, CII), ubiquinol-cytochrome c oxidoreductase (cytochrome b-c1 complex, complex III, CIII) and cytochrome c oxidase (complex IV, CIV), that cooperate to transfer electrons derived from NADH and succinate to molecular oxygen, creating an electrochemical gradient over the inner membrane that drives transmembrane transport and the ATP synthase. Cytochrome c oxidase is the component of the respiratory chain that catalyzes the reduction of oxygen to water. Electrons originating from reduced cytochrome c in the intermembrane space (IMS) are transferred via the dinuclear copper A center (CU(A)) of subunit 2 and heme A of subunit 1 to the active site in subunit 1, a binuclear center (BNC) formed by heme A3 and copper B (CU(B)). The BNC reduces molecular oxygen to 2 water molecules using 4 electrons from cytochrome c in the IMS and 4 protons from the mitochondrial matrix. The polypeptide is Cytochrome c oxidase subunit 7C, mitochondrial (COX7C) (Sus scrofa (Pig)).